A 309-amino-acid polypeptide reads, in one-letter code: tRNA-dihydrouridine(16) synthase (309 aa).

Residues Pro-7–Glu-9 and Gln-68 each bind FMN. Cys-98 (proton donor) is an active-site residue. Residues Arg-137, Asn-198, and Gly-220–Cys-221 contribute to the FMN site.

This sequence belongs to the Dus family. DusC subfamily. FMN is required as a cofactor.

The catalysed reaction is 5,6-dihydrouridine(16) in tRNA + NADP(+) = uridine(16) in tRNA + NADPH + H(+). It catalyses the reaction 5,6-dihydrouridine(16) in tRNA + NAD(+) = uridine(16) in tRNA + NADH + H(+). Functionally, catalyzes the synthesis of 5,6-dihydrouridine (D), a modified base found in the D-loop of most tRNAs, via the reduction of the C5-C6 double bond in target uridines. Specifically modifies U16 in tRNAs. The polypeptide is tRNA-dihydrouridine(16) synthase (Azotobacter vinelandii).